The following is a 679-amino-acid chain: Protein white (679 aa).

The segment at 1 to 34 is disordered; that stretch reads MGQEDQEVLIRGGKATSTSAESLNNNNEQPYEQS. The span at 15–34 shows a compositional bias: polar residues; sequence ATSTSAESLNNNNEQPYEQS. The ABC transporter domain maps to 84–332; that stretch reads NRVKGVFCNE…FSYIGATCPT (249 aa). Position 121-128 (121-128) interacts with ATP; the sequence is GSSGAGKT. Helical transmembrane passes span 427–445, 457–477, 507–525, 534–555, and 568–586; these read LLQT…LGQQ, AIFL…ITVF, LPLF…YPLI, FFTA…GYLI, and VGPP…FLNS. Asn628 and Asn643 each carry an N-linked (GlcNAc...) asparagine glycan. The chain crosses the membrane as a helical span at residues 651 to 670; that stretch reads FDFIGLALLIVGFRISAYIA.

This sequence belongs to the ABC transporter superfamily. ABCG family. Eye pigment precursor importer (TC 3.A.1.204) subfamily.

It is found in the membrane. Functionally, may be part of a membrane-spanning permease system necessary for the transport of pigment precursors into pigment cells responsible for eye color. This is Protein white (W) from Ceratitis capitata (Mediterranean fruit fly).